Reading from the N-terminus, the 699-residue chain is Osmotic avoidance abnormal protein 3 (699 aa).

The Kinesin motor domain occupies S4–I327. Residue G87 to T94 participates in ATP binding. The stretch at D339–E523 forms a coiled coil.

Belongs to the TRAFAC class myosin-kinesin ATPase superfamily. Kinesin family. Kinesin II subfamily. Expressed in an exclusive set of 26 chemosensory neurons whose dendritic endings are exposed to the external environment; six IL2 neurons of the inner labial sensilla, 8 pairs of amphid neurons in the head, and 2 pairs of phasmid neurons in the tail.

The protein localises to the cytoplasm. It is found in the cytoskeleton. It localises to the cell projection. The protein resides in the cilium. Its subcellular location is the cilium axoneme. The protein localises to the cilium basal body. Functionally, kinesin motor protein which is required for the anterograde intraflagellar transport (IFT) along the middle segment of the sensory neuron cilia together with the kinesin II motor complex (composed of klp-11, klp-20 and kap-1) and on its own, is required for IFT along the distal segment. In addition, regulates the length of cilia. May have a role during neurogenesis and axonal transport. In Caenorhabditis elegans, this protein is Osmotic avoidance abnormal protein 3.